We begin with the raw amino-acid sequence, 235 residues long: tRNA pseudouridine synthase B (235 aa).

Residue Asp45 is the Nucleophile of the active site.

The protein belongs to the pseudouridine synthase TruB family. Type 1 subfamily.

The catalysed reaction is uridine(55) in tRNA = pseudouridine(55) in tRNA. In terms of biological role, responsible for synthesis of pseudouridine from uracil-55 in the psi GC loop of transfer RNAs. This Chlamydia felis (strain Fe/C-56) (Chlamydophila felis) protein is tRNA pseudouridine synthase B.